A 118-amino-acid chain; its full sequence is MKTLPKERRYETFSYLPPLSDAQIARQIQYAIDQGYHPCVEFNETSNAEIRYWTMWKLPLFNCTNAQDVLNEVQQCRSEYPNCFIRVVAFDNIKQCQVMSFIVYKPNQANSGYSGYRY.

The protein belongs to the RuBisCO small chain family. As to quaternary structure, heterohexadecamer of 8 large and 8 small subunits.

Its subcellular location is the carboxysome. In terms of biological role, ruBisCO catalyzes two reactions: the carboxylation of D-ribulose 1,5-bisphosphate, the primary event in carbon dioxide fixation, as well as the oxidative fragmentation of the pentose substrate in the photorespiration process. Both reactions occur simultaneously and in competition at the same active site. Although the small subunit is not catalytic it is essential for maximal activity. In Thermosynechococcus vestitus (strain NIES-2133 / IAM M-273 / BP-1), this protein is Ribulose bisphosphate carboxylase small subunit.